A 302-amino-acid polypeptide reads, in one-letter code: UDP-N-acetylenolpyruvoylglucosamine reductase (302 aa).

In terms of domain architecture, FAD-binding PCMH-type spans 27-192 (KTGGPADYVA…VSVTFGLKPG (166 aa)). Residue R171 is part of the active site. S221 functions as the Proton donor in the catalytic mechanism. E291 is an active-site residue.

Belongs to the MurB family. FAD is required as a cofactor.

Its subcellular location is the cytoplasm. The catalysed reaction is UDP-N-acetyl-alpha-D-muramate + NADP(+) = UDP-N-acetyl-3-O-(1-carboxyvinyl)-alpha-D-glucosamine + NADPH + H(+). It functions in the pathway cell wall biogenesis; peptidoglycan biosynthesis. Functionally, cell wall formation. This is UDP-N-acetylenolpyruvoylglucosamine reductase from Lactiplantibacillus plantarum (strain ATCC BAA-793 / NCIMB 8826 / WCFS1) (Lactobacillus plantarum).